Reading from the N-terminus, the 554-residue chain is Bifunctional epoxide hydrolase 2 (554 aa).

Residues 1 to 224 (MALRVAAFDL…KVTGTQFPEA (224 aa)) are phosphatase. Mg(2+) is bound by residues D9 and D11. N6-succinyllysine is present on K55. 123–124 (TN) contacts phosphate. K176 carries the post-translational modification N6-acetyllysine; alternate. The residue at position 176 (K176) is an N6-succinyllysine; alternate. A Mg(2+)-binding site is contributed by D185. An N6-acetyllysine mark is found at K191 and K215. Positions 233-554 (NDVSHGYVTV…VQNPSVTSKI (322 aa)) are epoxide hydrolase. Positions 257 to 530 (PALCLCHGFP…CGHWTQIEKP (274 aa)) constitute an AB hydrolase-1 domain. The active-site Nucleophile is the D333. S368 bears the Phosphoserine mark. N6-succinyllysine is present on K371. Y381 is a substrate binding site. An N6-succinyllysine mark is found at K420 and K454. The active-site Proton donor is Y465. K504 carries the N6-succinyllysine modification. Position 508 is an N6-acetyllysine; alternate (K508). At K508 the chain carries N6-succinyllysine; alternate. A lipid anchor (S-(15-deoxy-Delta12,14-prostaglandin J2-9-yl)cysteine) is attached at C521. The active-site Proton acceptor is the H523. The Microbody targeting signal motif lies at 552-554 (SKI). K553 is modified (N6-succinyllysine).

Belongs to the AB hydrolase superfamily. Epoxide hydrolase family. Homodimer. Mg(2+) is required as a cofactor. Post-translationally, the N-terminus is blocked. The covalent modification of cysteine by 15-deoxy-Delta12,14-prostaglandin-J2 is autocatalytic and reversible. It may occur as an alternative to other cysteine modifications, such as S-nitrosylation and S-palmitoylation. Detected in liver, intestine, ovary and kidney. Detected at low levels in heart and muscle.

The protein localises to the cytoplasm. Its subcellular location is the peroxisome. The catalysed reaction is an epoxide + H2O = an ethanediol. The enzyme catalyses (9S,10S)-10-hydroxy-9-(phosphooxy)octadecanoate + H2O = (9S,10S)-9,10-dihydroxyoctadecanoate + phosphate. It carries out the reaction 8-hydroxy-(11S,12S)-epoxy-(5Z,9E,14Z)-eicosatrienoate + H2O = (8,11R,12S)-trihydroxy-(5Z,9E,14Z)-eicosatrienoate. It catalyses the reaction 10-hydroxy-(11S,12S)-epoxy- (5Z,8Z,14Z)-eicosatrienoate + H2O = (10,11S,12R)-trihydroxy-(5Z,8Z,14Z)-eicosatrienoate. The catalysed reaction is (8S,9R)-epoxy-(5Z,11Z,14Z)-eicosatrienoate + H2O = (8S,9S)-dihydroxy-(5Z,11Z,14Z)-eicosatrienoate. The enzyme catalyses (11S,12R)-epoxy-(5Z,8Z,14Z)-eicosatrienoate + H2O = (11R,12R)-dihydroxy-(5Z,8Z,14Z)-eicosatrienoate. It carries out the reaction (11S,12R)-epoxy-(5Z,8Z,14Z)-eicosatrienoate + H2O = (11S,12S)-dihydroxy-(5Z,8Z,14Z)-eicosatrienoate. It catalyses the reaction (14S,15R)-epoxy-(5Z,8Z,11Z)-eicosatrienoate + H2O = (14R,15R)-dihydroxy-(5Z,8Z,11Z)-eicosatrienoate. The catalysed reaction is (14S,15R)-epoxy-(5Z,8Z,11Z)-eicosatrienoate + H2O = (14S,15S)-dihydroxy-(5Z,8Z,11Z)-eicosatrienoate. The enzyme catalyses (11R,12S)-epoxy-(5Z,8Z,14Z)-eicosatrienoate + H2O = (11S,12S)-dihydroxy-(5Z,8Z,14Z)-eicosatrienoate. It carries out the reaction (11R,12S)-epoxy-(5Z,8Z,14Z)-eicosatrienoate + H2O = (11R,12R)-dihydroxy-(5Z,8Z,14Z)-eicosatrienoate. It catalyses the reaction (8S,9R)-epoxy-(5Z,11Z,14Z)-eicosatrienoate + H2O = (8R,9R)-dihydroxy-(5Z,11Z,14Z)-eicosatrienoate. The catalysed reaction is 12-phosphooxy-(9Z)-octadecenoate + H2O = 12-hydroxy-(9Z)-octadecenoate + phosphate. The enzyme catalyses 12-phosphooxy-(9E)-octadecenoate + H2O = 12-hydroxy-(9E)-octadecenoate + phosphate. It carries out the reaction 12-(phosphooxy)octadecanoate + H2O = 12-hydroxyoctadecanoate + phosphate. It catalyses the reaction 8,9-epoxy-(5Z,11Z,14Z)-eicosatrienoate + H2O = 8,9-dihydroxy-(5Z,11Z,14Z)-eicosatrienoate. The catalysed reaction is 11,12-epoxy-(5Z,8Z,14Z)-eicosatrienoate + H2O = 11,12-dihydroxy-(5Z,8Z,14Z)-eicosatrienoate. The enzyme catalyses 14,15-epoxy-(5Z,8Z,11Z)-eicosatrienoate + H2O = 14,15-dihydroxy-(5Z,8Z,11Z)-eicosatrienoate. It carries out the reaction 9,10-epoxy-(12Z)-octadecenoate + H2O = 9,10-dihydroxy-(12Z)-octadecenoate. It catalyses the reaction 1-tetradecanoyl-sn-glycerol 3-phosphate + H2O = 1-tetradecanoyl-sn-glycerol + phosphate. The catalysed reaction is 1-octadecanoyl-sn-glycero-3-phosphate + H2O = 1-octadecanoyl-sn-glycerol + phosphate. The enzyme catalyses 1-(5Z,8Z,11Z,14Z-eicosatetraenoyl)-sn-glycero-3-phosphate + H2O = 1-(5Z,8Z,11Z,14Z-eicosatetraenoyl)-sn-glycerol + phosphate. It carries out the reaction 1-hexadecanoyl-sn-glycero-3-phosphate + H2O = 1-hexadecanoyl-sn-glycerol + phosphate. It catalyses the reaction 1-(9Z-octadecenoyl)-sn-glycero-3-phosphate + H2O = 1-(9Z-octadecenoyl)-sn-glycerol + phosphate. The catalysed reaction is (14R,15S)-epoxy-(5Z,8Z,11Z)-eicosatrienoate + H2O = (14R,15R)-dihydroxy-(5Z,8Z,11Z)-eicosatrienoate. Its activity is regulated as follows. Inhibited by 1-(1-acetylpiperidin-4-yl)-3-(4-(trifl uoromethoxy)phenyl)urea (TPAU), 1-cyclohexyl-3-dodecylurea (CDU), 12-(3-adamantan-1-yl-ureido)-dodecanoic acid (AUDA), 1-((3S, 5S, 7S)-adamantan-1-yl)-3-(5-(2-(2-ethoxyethoxy) ethoxy)pentyl)urea (AEPU), N-adamantyl-N[']-cyclohexyl urea (ACU), 4-(((1S, 4S)-4-(3-((3S, 5S, 7S)-adamantan-1-yl) ureido)cyclohexyl)oxy)benzoic acid (c-AUCB), 4-(((1R, 4R)-4-(3-((3S, 5S, 7S)-adamantan-1-yl)ureido)cyclohexyl)oxy)benzoic acid (t-AUCB), 4-(((1R, 4R)-4-(3-(4(trifluoromethoxy)phenyl)ureido)cyclohexyl)oxy)benzoic acid (t-TAUCB) and to a lesser extent by 8-(3-((3S, 5S, 7S)-adamantan-1-yl)ureido) octanoic acid (AUOA). Phosphatase activity is inhibited by dodecyl-phosphate, phospholipids such as phospho-lysophosphatidic acids and fatty acids such as palmitic acid and lauric acid. Bifunctional enzyme. The C-terminal domain has epoxide hydrolase activity and acts on epoxides (alkene oxides, oxiranes) and arene oxides. Plays a role in xenobiotic metabolism by degrading potentially toxic epoxides. Also determines steady-state levels of physiological mediators. Its function is as follows. Bifunctional enzyme. The N-terminal domain has lipid phosphatase activity, with the highest activity towards threo-9,10-phosphonooxy-hydroxy-octadecanoic acid, followed by erythro-9,10-phosphonooxy-hydroxy-octadecanoic acid, 12-phosphonooxy-octadec-9Z-enoic acid and 12-phosphonooxy-octadec-9E-enoic acid. Has phosphatase activity toward lyso-glycerophospholipids with also some lower activity toward lysolipids of sphingolipid and isoprenoid phosphates. The sequence is that of Bifunctional epoxide hydrolase 2 from Mus musculus (Mouse).